Consider the following 293-residue polypeptide: ATP synthase gamma chain (293 aa).

This sequence belongs to the ATPase gamma chain family. F-type ATPases have 2 components, CF(1) - the catalytic core - and CF(0) - the membrane proton channel. CF(1) has five subunits: alpha(3), beta(3), gamma(1), delta(1), epsilon(1). CF(0) has three main subunits: a, b and c.

It localises to the cell inner membrane. Its function is as follows. Produces ATP from ADP in the presence of a proton gradient across the membrane. The gamma chain is believed to be important in regulating ATPase activity and the flow of protons through the CF(0) complex. The protein is ATP synthase gamma chain of Chlorobium chlorochromatii (strain CaD3).